A 67-amino-acid polypeptide reads, in one-letter code: Large ribosomal subunit protein bL35 (67 aa).

Belongs to the bacterial ribosomal protein bL35 family.

This chain is Large ribosomal subunit protein bL35, found in Novosphingobium aromaticivorans (strain ATCC 700278 / DSM 12444 / CCUG 56034 / CIP 105152 / NBRC 16084 / F199).